Consider the following 201-residue polypeptide: Cytochrome c4 (201 aa).

The first 20 residues, 1-20 (MNKLLVSLLLTLGLTGLAHA), serve as a signal peptide directing secretion. Cys34, Cys37, His38, Met77, Cys130, Cys133, His134, and Met178 together coordinate heme c.

Binds 2 heme c groups covalently per subunit.

The protein localises to the periplasm. In terms of biological role, diheme, high potential cytochrome c believed to be an intermediate electron donor to terminal oxidation systems. This Pseudomonas aeruginosa (strain ATCC 15692 / DSM 22644 / CIP 104116 / JCM 14847 / LMG 12228 / 1C / PRS 101 / PAO1) protein is Cytochrome c4 (cc4).